Here is a 348-residue protein sequence, read N- to C-terminus: Holliday junction branch migration complex subunit RuvB (348 aa).

The interval 4 to 184 is large ATPase domain (RuvB-L); sequence ADRLIAASGR…FGIVQRLEFY (181 aa). ATP contacts are provided by residues I23, R24, G65, K68, T69, T70, 131 to 133, R174, Y184, and R221; that span reads EDF. T69 serves as a coordination point for Mg(2+). Residues 185 to 255 are small ATPAse domain (RuvB-S); it reads NDKDLSTIVS…VADMALNLLD (71 aa). Residues 258–348 form a head domain (RuvB-H) region; it reads ERGFDHSDRR…GGDFSGPGDE (91 aa). DNA is bound by residues R294, R313, and R318.

The protein belongs to the RuvB family. Homohexamer. Forms an RuvA(8)-RuvB(12)-Holliday junction (HJ) complex. HJ DNA is sandwiched between 2 RuvA tetramers; dsDNA enters through RuvA and exits via RuvB. An RuvB hexamer assembles on each DNA strand where it exits the tetramer. Each RuvB hexamer is contacted by two RuvA subunits (via domain III) on 2 adjacent RuvB subunits; this complex drives branch migration. In the full resolvosome a probable DNA-RuvA(4)-RuvB(12)-RuvC(2) complex forms which resolves the HJ.

It is found in the cytoplasm. The catalysed reaction is ATP + H2O = ADP + phosphate + H(+). Its function is as follows. The RuvA-RuvB-RuvC complex processes Holliday junction (HJ) DNA during genetic recombination and DNA repair, while the RuvA-RuvB complex plays an important role in the rescue of blocked DNA replication forks via replication fork reversal (RFR). RuvA specifically binds to HJ cruciform DNA, conferring on it an open structure. The RuvB hexamer acts as an ATP-dependent pump, pulling dsDNA into and through the RuvAB complex. RuvB forms 2 homohexamers on either side of HJ DNA bound by 1 or 2 RuvA tetramers; 4 subunits per hexamer contact DNA at a time. Coordinated motions by a converter formed by DNA-disengaged RuvB subunits stimulates ATP hydrolysis and nucleotide exchange. Immobilization of the converter enables RuvB to convert the ATP-contained energy into a lever motion, pulling 2 nucleotides of DNA out of the RuvA tetramer per ATP hydrolyzed, thus driving DNA branch migration. The RuvB motors rotate together with the DNA substrate, which together with the progressing nucleotide cycle form the mechanistic basis for DNA recombination by continuous HJ branch migration. Branch migration allows RuvC to scan DNA until it finds its consensus sequence, where it cleaves and resolves cruciform DNA. The polypeptide is Holliday junction branch migration complex subunit RuvB (Pseudomonas putida (strain ATCC 700007 / DSM 6899 / JCM 31910 / BCRC 17059 / LMG 24140 / F1)).